We begin with the raw amino-acid sequence, 432 residues long: Myb family transcription factor EFM (432 aa).

A coiled-coil region spans residues 36–81 (LEDLLSRLEQERLKIDAFKRELPLCMQLLNNAVEVYKQQLEAYRAN). Polar residues-rich tracts occupy residues 123-139 (SQSE…TDQS) and 187-197 (SPTNEHTNGQD). Residues 123–237 (SQSETKPKNI…SQSNRKARRC (115 aa)) form a disordered region. Residues 201 to 231 (ESMINNDNNYNNNNNNNSNSNGVSSTTSQSN) are compositionally biased toward low complexity. The HTH myb-type domain occupies 230 to 290 (SNRKARRCWS…HLQKYRLHTR (61 aa)). The segment at residues 261-286 (PKQIRELMKVDGLTNDEVKSHLQKYR) is a DNA-binding region (H-T-H motif). The tract at residues 354-412 (FYTTPPPPQPLHHHHFQTFNGSSGGTASTDSTHHQVTDSPTVEGKSPESGGGERKGLAA) is disordered.

Interacts with JMJ30, but not with SVP, FLC or CO. In terms of tissue distribution, specifically expressed in vascular tissues of cotyledons, rosette leaves and cauline leaves. Not detected in the vegetative shoot apical meristem.

Its subcellular location is the nucleus. Its function is as follows. Transcription factor acting as a flowering repressor, directly repressing FT expression in a dosage-dependent manner in the leaf vasculature. In Arabidopsis thaliana (Mouse-ear cress), this protein is Myb family transcription factor EFM.